Here is a 452-residue protein sequence, read N- to C-terminus: Exodeoxyribonuclease 7 large subunit (452 aa).

This sequence belongs to the XseA family. As to quaternary structure, heterooligomer composed of large and small subunits.

The protein localises to the cytoplasm. The enzyme catalyses Exonucleolytic cleavage in either 5'- to 3'- or 3'- to 5'-direction to yield nucleoside 5'-phosphates.. Its function is as follows. Bidirectionally degrades single-stranded DNA into large acid-insoluble oligonucleotides, which are then degraded further into small acid-soluble oligonucleotides. In Bacillus cereus (strain 03BB102), this protein is Exodeoxyribonuclease 7 large subunit.